Reading from the N-terminus, the 293-residue chain is Mimecan (293 aa).

Residues Met-1–Pro-19 form the signal peptide. Residue Asn-60 is glycosylated (N-linked (GlcNAc...) asparagine). 7 LRR repeats span residues Glu-107 to Ile-126, Lys-127 to Ile-150, Glu-151 to Leu-174, Val-175 to Ile-194, Lys-195 to Leu-220, Glu-221 to Ile-241, and Thr-242 to Ile-272. N-linked (GlcNAc...) asparagine glycans are attached at residues Asn-240 and Asn-253. Cys-250 and Cys-283 form a disulfide bridge.

It belongs to the small leucine-rich proteoglycan (SLRP) family. SLRP class III subfamily. Contains keratan sulfate. In terms of tissue distribution, expressed in many tissues.

It is found in the secreted. It localises to the extracellular space. The protein resides in the extracellular matrix. Its function is as follows. Induces bone formation in conjunction with TGF-beta-1 or TGF-beta-2. The sequence is that of Mimecan (OGN) from Coturnix japonica (Japanese quail).